The chain runs to 305 residues: Serine/threonine-protein phosphatase 6 catalytic subunit (305 aa).

Mn(2+)-binding residues include Asp54, His56, Asp82, and Asn114. His115 acts as the Proton donor in catalysis. His164 and His238 together coordinate Mn(2+).

It belongs to the PPP phosphatase family. PP-6 (PP-V) subfamily. Mn(2+) serves as cofactor.

It carries out the reaction O-phospho-L-seryl-[protein] + H2O = L-seryl-[protein] + phosphate. The catalysed reaction is O-phospho-L-threonyl-[protein] + H2O = L-threonyl-[protein] + phosphate. The polypeptide is Serine/threonine-protein phosphatase 6 catalytic subunit (ppp6c) (Dictyostelium discoideum (Social amoeba)).